Reading from the N-terminus, the 89-residue chain is Small ribosomal subunit protein uS15 (89 aa).

This sequence belongs to the universal ribosomal protein uS15 family. Part of the 30S ribosomal subunit. Forms a bridge to the 50S subunit in the 70S ribosome, contacting the 23S rRNA.

In terms of biological role, one of the primary rRNA binding proteins, it binds directly to 16S rRNA where it helps nucleate assembly of the platform of the 30S subunit by binding and bridging several RNA helices of the 16S rRNA. Its function is as follows. Forms an intersubunit bridge (bridge B4) with the 23S rRNA of the 50S subunit in the ribosome. The polypeptide is Small ribosomal subunit protein uS15 (Thermomicrobium roseum (strain ATCC 27502 / DSM 5159 / P-2)).